A 398-amino-acid chain; its full sequence is Pectate lyase 1 (398 aa).

An N-terminal signal peptide occupies residues methionine 1 to serine 25. A glycan (N-linked (GlcNAc...) asparagine) is linked at asparagine 37. The cysteines at positions 55 and 72 are disulfide-linked. Residues aspartate 195, aspartate 219, and aspartate 223 each contribute to the Ca(2+) site. The active site involves arginine 275.

It belongs to the polysaccharide lyase 1 family. Amb a subfamily. Monomer. Requires Ca(2+) as cofactor. The N-terminus is blocked. In terms of tissue distribution, pollen and flowers.

The catalysed reaction is Eliminative cleavage of (1-&gt;4)-alpha-D-galacturonan to give oligosaccharides with 4-deoxy-alpha-D-galact-4-enuronosyl groups at their non-reducing ends.. Its pathway is glycan metabolism; pectin degradation; 2-dehydro-3-deoxy-D-gluconate from pectin: step 2/5. Its function is as follows. Has pectate lyase activity. The chain is Pectate lyase 1 from Ambrosia artemisiifolia (Common ragweed).